A 254-amino-acid polypeptide reads, in one-letter code: 14-3-3-like protein GF14 epsilon (254 aa).

Residues serine 65 and serine 188 each carry the phosphoserine modification.

Belongs to the 14-3-3 family. As to quaternary structure, interacts with DREB1A and DREB1B in the nucleus. Interacts with CINV1.

It localises to the nucleus. The protein resides in the cytoplasm. Its function is as follows. Is associated with a DNA binding complex that binds to the G box, a well-characterized cis-acting DNA regulatory element found in plant genes. The chain is 14-3-3-like protein GF14 epsilon (GRF10) from Arabidopsis thaliana (Mouse-ear cress).